Here is a 513-residue protein sequence, read N- to C-terminus: ATP synthase subunit alpha (513 aa).

Position 169-176 (169-176) interacts with ATP; sequence GDRQTGKT.

The protein belongs to the ATPase alpha/beta chains family. As to quaternary structure, F-type ATPases have 2 components, CF(1) - the catalytic core - and CF(0) - the membrane proton channel. CF(1) has five subunits: alpha(3), beta(3), gamma(1), delta(1), epsilon(1). CF(0) has three main subunits: a(1), b(2) and c(9-12). The alpha and beta chains form an alternating ring which encloses part of the gamma chain. CF(1) is attached to CF(0) by a central stalk formed by the gamma and epsilon chains, while a peripheral stalk is formed by the delta and b chains.

Its subcellular location is the cell inner membrane. The catalysed reaction is ATP + H2O + 4 H(+)(in) = ADP + phosphate + 5 H(+)(out). Produces ATP from ADP in the presence of a proton gradient across the membrane. The alpha chain is a regulatory subunit. The chain is ATP synthase subunit alpha from Idiomarina loihiensis (strain ATCC BAA-735 / DSM 15497 / L2-TR).